A 193-amino-acid polypeptide reads, in one-letter code: Putative manganese efflux pump MntP (193 aa).

6 helical membrane passes run 3–23 (IFAV…VAVV), 41–61 (AAFG…GVSV), 69–89 (DHWI…LSGL), 107–127 (AGRN…AVGL), 130–150 (AILG…CAVI), and 164–184 (LCAL…AIAC).

This sequence belongs to the MntP (TC 9.B.29) family.

The protein resides in the cell inner membrane. Functionally, probably functions as a manganese efflux pump. The chain is Putative manganese efflux pump MntP from Desulfovibrio desulfuricans (strain ATCC 27774 / DSM 6949 / MB).